Consider the following 124-residue polypeptide: Fluoride-specific ion channel FluC (124 aa).

The next 4 membrane-spanning stretches (helical) occupy residues 5–25 (ILAVSIAGIAGTLLRFAAGTW), 37–57 (ATLAVNIVGCLIIGVLYGLFL), 69–89 (GLIVGFVGGLTTFSSFSLDTL), and 99–119 (LALGYAGISVFGGLLATWAGL). Residues G76 and T79 each contribute to the Na(+) site.

Belongs to the fluoride channel Fluc/FEX (TC 1.A.43) family.

It localises to the cell inner membrane. The enzyme catalyses fluoride(in) = fluoride(out). Its activity is regulated as follows. Na(+) is not transported, but it plays an essential structural role and its presence is essential for fluoride channel function. In terms of biological role, fluoride-specific ion channel. Important for reducing fluoride concentration in the cell, thus reducing its toxicity. This is Fluoride-specific ion channel FluC from Pseudomonas syringae pv. tomato (strain ATCC BAA-871 / DC3000).